Consider the following 125-residue polypeptide: Type-4 ice-structuring protein (125 aa).

The signal sequence occupies residues 1-20; the sequence is MKYTLIAAIVVLALAQGTLA.

It belongs to the apolipoprotein A1/A4/E family.

The protein localises to the secreted. Antifreeze proteins lower the blood freezing point. The sequence is that of Type-4 ice-structuring protein from Gadus morhua (Atlantic cod).